A 112-amino-acid polypeptide reads, in one-letter code: UstYa family oxidase VicYb (112 aa).

Short sequence motifs (HXXHC) lie at residues 9–13 (HYLHC) and 36–40 (HLDHC).

This sequence belongs to the ustYa family.

It participates in mycotoxin biosynthesis. UstYa family oxidase, part of the gene cluster that mediates the biosynthesis of the secondary metabolite victorin, the molecular basis for Victoria blight of oats. Within the pathway, vicYb catalyzes the oxidative cyclization of the core peptide. The pathway starts with the processing of the precursor vicA1 by several endopeptidases including kexin proteases as well as the cluster-specific S28 family peptidases vicPa and vicPb to produce 7 identical copies of the hexapeptide Gly-Leu-Lys-Leu-Ala-Phe. After being excised from the precursor peptide, the core peptides are cyclized and modified post-translationally by enzymes encoded within the gene cluster. The ustYa family oxidase vicYb is required for the formation of the macrocycle in victorin and the copper amine oxidases (CAOs) vicK1 and vicK2 are responsible for converting victorin to the active form by oxidizing the N-terminal glycyl residue in the peptides to glyoxylate. Relaxed substrate specificity of enzymes in the victorin biosynthetic pathway results in a metabolic grid that produces a set of analogs including victorinines B, C, E or HV-toxin M. The protein is UstYa family oxidase VicYb of Bipolaris victoriae (strain FI3) (Victoria blight of oats agent).